The sequence spans 163 residues: Transcription elongation factor GreB (163 aa).

The stretch at 54 to 76 (GKRRMREIDRRIRFLTKRLEAAV) forms a coiled coil.

This sequence belongs to the GreA/GreB family. GreB subfamily.

In terms of biological role, necessary for efficient RNA polymerase transcription elongation past template-encoded arresting sites. The arresting sites in DNA have the property of trapping a certain fraction of elongating RNA polymerases that pass through, resulting in locked ternary complexes. Cleavage of the nascent transcript by cleavage factors such as GreA or GreB allows the resumption of elongation from the new 3'terminus. GreB releases sequences of up to 9 nucleotides in length. The polypeptide is Transcription elongation factor GreB (Neisseria meningitidis serogroup A / serotype 4A (strain DSM 15465 / Z2491)).